A 190-amino-acid chain; its full sequence is Bifunctional protein PyrR (190 aa).

The PRPP-binding motif lies at 112–124 (VILVDDVLYSGRS).

Belongs to the purine/pyrimidine phosphoribosyltransferase family. PyrR subfamily.

It catalyses the reaction UMP + diphosphate = 5-phospho-alpha-D-ribose 1-diphosphate + uracil. Functionally, regulates the transcription of the pyrimidine nucleotide (pyr) operon in response to exogenous pyrimidines. Also displays a weak uracil phosphoribosyltransferase activity which is not physiologically significant. This chain is Bifunctional protein PyrR, found in Mycolicibacterium paratuberculosis (strain ATCC BAA-968 / K-10) (Mycobacterium paratuberculosis).